Reading from the N-terminus, the 338-residue chain is Holliday junction branch migration complex subunit RuvB (338 aa).

The large ATPase domain (RuvB-L) stretch occupies residues M1 to Y184. ATP contacts are provided by residues L23, R24, G65, K68, T69, T70, E131–F133, R174, Y184, and R221. T69 is a binding site for Mg(2+). A small ATPAse domain (RuvB-S) region spans residues Q185 to Q255. A head domain (RuvB-H) region spans residues H258 to N338. Residues R313 and R318 each contribute to the DNA site.

Belongs to the RuvB family. Homohexamer. Forms an RuvA(8)-RuvB(12)-Holliday junction (HJ) complex. HJ DNA is sandwiched between 2 RuvA tetramers; dsDNA enters through RuvA and exits via RuvB. An RuvB hexamer assembles on each DNA strand where it exits the tetramer. Each RuvB hexamer is contacted by two RuvA subunits (via domain III) on 2 adjacent RuvB subunits; this complex drives branch migration. In the full resolvosome a probable DNA-RuvA(4)-RuvB(12)-RuvC(2) complex forms which resolves the HJ.

It is found in the cytoplasm. The catalysed reaction is ATP + H2O = ADP + phosphate + H(+). Functionally, the RuvA-RuvB-RuvC complex processes Holliday junction (HJ) DNA during genetic recombination and DNA repair, while the RuvA-RuvB complex plays an important role in the rescue of blocked DNA replication forks via replication fork reversal (RFR). RuvA specifically binds to HJ cruciform DNA, conferring on it an open structure. The RuvB hexamer acts as an ATP-dependent pump, pulling dsDNA into and through the RuvAB complex. RuvB forms 2 homohexamers on either side of HJ DNA bound by 1 or 2 RuvA tetramers; 4 subunits per hexamer contact DNA at a time. Coordinated motions by a converter formed by DNA-disengaged RuvB subunits stimulates ATP hydrolysis and nucleotide exchange. Immobilization of the converter enables RuvB to convert the ATP-contained energy into a lever motion, pulling 2 nucleotides of DNA out of the RuvA tetramer per ATP hydrolyzed, thus driving DNA branch migration. The RuvB motors rotate together with the DNA substrate, which together with the progressing nucleotide cycle form the mechanistic basis for DNA recombination by continuous HJ branch migration. Branch migration allows RuvC to scan DNA until it finds its consensus sequence, where it cleaves and resolves cruciform DNA. The sequence is that of Holliday junction branch migration complex subunit RuvB from Enterococcus faecalis (strain ATCC 700802 / V583).